Reading from the N-terminus, the 497-residue chain is Uridine 5'-monophosphate synthase (497 aa).

The interval 8–226 (TRNGALKRNL…KLEINSELEN (219 aa)) is OPRTase. The segment at 227-232 (LSSLPY) is domain linker. The interval 233–496 (VENVRTPLAE…WDALTRSDDS (264 aa)) is OMPdecase. Residues aspartate 271 and 293–295 (KLH) contribute to the UMP site. Lysine 293 is a binding site for orotidine 5'-phosphate. Catalysis depends on for OMPdecase activity residues aspartate 324, lysine 326, and aspartate 329. Orotidine 5'-phosphate-binding positions include lysine 326, aspartate 329, threonine 333, serine 387, 446–448 (QQW), and 466–467 (GR). UMP-binding positions include aspartate 329, threonine 333, serine 387, 446–448 (QQW), and 466–467 (GR).

This sequence in the N-terminal section; belongs to the purine/pyrimidine phosphoribosyltransferase family. In the C-terminal section; belongs to the OMP decarboxylase family. As to expression, expressed in intestine and in neurons near the nerve ring and rectum.

It is found in the cytoplasm. The catalysed reaction is orotidine 5'-phosphate + diphosphate = orotate + 5-phospho-alpha-D-ribose 1-diphosphate. The enzyme catalyses orotidine 5'-phosphate + H(+) = UMP + CO2. It functions in the pathway pyrimidine metabolism; UMP biosynthesis via de novo pathway; UMP from orotate: step 1/2. It participates in pyrimidine metabolism; UMP biosynthesis via de novo pathway; UMP from orotate: step 2/2. Its function is as follows. Bifunctional enzyme which catalyzes the formation of UMP from orotate in the de novo pathway of pyrimidine biosynthesis. May also form UMP from uracil. Regulates the size of gut granules during embryonic development. Involved in resistance to DNA damaging agents including UV-C and X-ray radiation. The protein is Uridine 5'-monophosphate synthase of Caenorhabditis elegans.